The primary structure comprises 541 residues: Putative transferase YhbX (541 aa).

Topologically, residues 1 to 60 (MTVFNKFARSFKSHWLLYLSVIVFGITNLVASSGAHMVQRLLFFVLTILVVKRISSLPLR) are periplasmic. A helical membrane pass occupies residues 61 to 81 (LLVAAPFVLLTAADMSISLYS). Residues 82–110 (WCTFGTTFNDGFAISVLQSDPDEVAKMLG) are Cytoplasmic-facing. Residues 111–131 (MYSPYLCAFAFLSLLFLAVII) form a helical membrane-spanning segment. At 132–141 (KYDVSLPTKK) the chain is on the periplasmic side. Residues 142–162 (VTGILLLIVISGSLFSACQFA) form a helical membrane-spanning segment. Residues 163-264 (YKDAKNKNAF…RKQIKLFNQA (102 aa)) are Cytoplasmic-facing. A helical transmembrane segment spans residues 265 to 285 (ISGAPYTALSVPLSLTADSVL). Residues 286–541 (SHDIHNYPDN…QGNPTPEGQG (256 aa)) are Periplasmic-facing.

This sequence belongs to the phosphoethanolamine transferase family.

It is found in the cell inner membrane. There are several lipid A forms in this strain, including a phosphoethanolamine (1-O-P-pEtN) form; overexpression of this gene does not lead to higher levels of the 1-O-P-pEtN form of lipid A. In Escherichia coli O157:H7, this protein is Putative transferase YhbX (yhbX).